A 1204-amino-acid chain; its full sequence is Probable cation-transporting ATPase 13A4 (1204 aa).

Topologically, residues 1–32 are cytoplasmic; that stretch reads MGENPAKSHYAQLNLGEENEMEIFGYKTQCCR. Residues 33-53 traverse the membrane as a helical segment; the sequence is KALCIAGYILSCGALLLLFYW. The Extracellular segment spans residues 54 to 219; sequence KPEWDVWANC…FSVCLWFAED (166 aa). The helical transmembrane segment at 220 to 242 threads the bilayer; the sequence is YMEYAAAIIIMSPLSISLTVYDL. Residues 243–397 are Cytoplasmic-facing; it reads RQQSVKLQRL…NFRLYRDALR (155 aa). The helical transmembrane segment at 398–418 threads the bilayer; sequence FLMCLIAFAAIGMIYTVCVFA. At 419–433 the chain is on the extracellular side; sequence LNGEEAGEVVKKALD. Residues 434-454 traverse the membrane as a helical segment; it reads VITIAVPPALPAALTTGIIYT. Residues 455 to 897 lie on the Cytoplasmic side of the membrane; it reads QRRLKKKGIF…REGRAALVTS (443 aa). The active-site 4-aspartylphosphate intermediate is Asp-483. Mg(2+) contacts are provided by Asp-845 and Asp-849. A helical membrane pass occupies residues 898–918; that stretch reads FCMFKYMALYSTIQYLGVLLL. At 919–929 the chain is on the extracellular side; it reads YWQLNSFGNYQ. Residues 930–950 traverse the membrane as a helical segment; the sequence is FLFQDLAITTVIGMTMSFTEA. At 951-967 the chain is on the cytoplasmic side; the sequence is YPKLVPYRPPSQLVSPP. The chain crosses the membrane as a helical span at residues 968 to 988; it reads LLLSVILNILFSLGMQILGFL. At 989–1043 the chain is on the extracellular side; sequence MVQKQPWYSKTDIHSACLSVNNHVENSSSASSLGLHGVGGGDPTEVDNGYKSYEN. The helical transmembrane segment at 1044–1064 threads the bilayer; the sequence is TTVWLLSTINCLIIALVFSKG. Residues 1065 to 1075 lie on the Cytoplasmic side of the membrane; it reads KPFRQPIYTNY. A helical transmembrane segment spans residues 1076 to 1096; the sequence is VFIMVLVGQLGVCLFLVFADI. At 1097–1113 the chain is on the extracellular side; sequence DDLYSKMDLVCTPTTWR. Residues 1114 to 1134 traverse the membrane as a helical segment; the sequence is ISMVMMLAVTLAVSFLVEEAI. Over 1135–1204 the chain is Cytoplasmic; that stretch reads IENRALWLWL…PTFDSNEDAL (70 aa).

The protein belongs to the cation transport ATPase (P-type) (TC 3.A.3) family. Type V subfamily.

The protein localises to the membrane. The enzyme catalyses ATP + H2O = ADP + phosphate + H(+). This Gallus gallus (Chicken) protein is Probable cation-transporting ATPase 13A4 (ATP13A4).